Reading from the N-terminus, the 414-residue chain is Histidine--tRNA ligase (414 aa).

The protein belongs to the class-II aminoacyl-tRNA synthetase family. In terms of assembly, homodimer.

It is found in the cytoplasm. It carries out the reaction tRNA(His) + L-histidine + ATP = L-histidyl-tRNA(His) + AMP + diphosphate + H(+). The protein is Histidine--tRNA ligase of Rickettsia conorii (strain ATCC VR-613 / Malish 7).